The primary structure comprises 216 residues: MOB kinase activator-like 1 homolog B (216 aa).

Positions 79, 84, 161, and 166 each coordinate Zn(2+).

The protein belongs to the MOB1/phocein family.

This Dictyostelium discoideum (Social amoeba) protein is MOB kinase activator-like 1 homolog B (mobB).